Consider the following 460-residue polypeptide: Armadillo repeat-containing protein LFR (460 aa).

The tract at residues 1-30 (MQKRELGKSGGNSGGSSGPPAKRGRPFGST) is disordered. Residues 8–17 (KSGGNSGGSS) are compositionally biased toward gly residues. ARM repeat units follow at residues 227-269 (DNEV…NLAH), 323-362 (NEPFISPLIPQIHKRLIDLLSIQAVDAQAAAVGALYNLVE), and 366-407 (DCRL…NLVS).

Interacts with AS2. As to expression, expressed in roots, leaves, stems and flowers.

The protein resides in the nucleus. Involved in leaf and flower development. Plays roles in leaf development partly by associating with AS2 and repressing KNAT1/BP transcription. Required for the formation of anther cell layers and normal expression of genes that regulates anther development. The protein is Armadillo repeat-containing protein LFR of Arabidopsis thaliana (Mouse-ear cress).